We begin with the raw amino-acid sequence, 288 residues long: Nucleotide-binding protein Gura_2968 (288 aa).

8–15 (GLSGSGKS) provides a ligand contact to ATP. GTP is bound at residue 59–62 (DIRG).

This sequence belongs to the RapZ-like family.

Its function is as follows. Displays ATPase and GTPase activities. This Geotalea uraniireducens (strain Rf4) (Geobacter uraniireducens) protein is Nucleotide-binding protein Gura_2968.